The following is a 286-amino-acid chain: Tungstate-binding protein TupA (286 aa).

A signal peptide spans 1–20; the sequence is MKRLLSIITAVMMLALALTG. A lipid anchor (N-palmitoyl cysteine) is attached at Cys21. Residue Cys21 is the site of S-diacylglycerol cysteine attachment.

As to quaternary structure, monomer. The complex is composed of two ATP-binding proteins (TupC), two transmembrane proteins (TupB) and a solute-binding protein (TupA).

The protein localises to the cell membrane. In terms of biological role, part of an ABC transporter complex involved in tungstate uptake. Specifically binds tungstate. The sequence is that of Tungstate-binding protein TupA from Peptoclostridium acidaminophilum (Eubacterium acidaminophilum).